Consider the following 601-residue polypeptide: Potassium-transporting ATPase potassium-binding subunit (601 aa).

A run of 12 helical transmembrane segments spans residues 3-23, 62-82, 132-152, 179-199, 283-303, 314-334, 367-387, 397-417, 419-439, 459-479, 523-543, and 564-584; these read ASAW…AWPL, HYAL…YALQ, LGLS…AFAL, AWVL…QGVI, LTNL…CFAF, VAIL…VTAA, FGIS…CGAV, LGGM…GGAG, GLYG…LMIG, VAIL…VLAP, VLLA…VLAI, and GPLF…LNYV.

This sequence belongs to the KdpA family. In terms of assembly, the system is composed of three essential subunits: KdpA, KdpB and KdpC.

It localises to the cell inner membrane. In terms of biological role, part of the high-affinity ATP-driven potassium transport (or Kdp) system, which catalyzes the hydrolysis of ATP coupled with the electrogenic transport of potassium into the cytoplasm. This subunit binds the periplasmic potassium ions and delivers the ions to the membrane domain of KdpB through an intramembrane tunnel. The sequence is that of Potassium-transporting ATPase potassium-binding subunit from Paracidovorax citrulli (strain AAC00-1) (Acidovorax citrulli).